Reading from the N-terminus, the 331-residue chain is Ketol-acid reductoisomerase (NADP(+)) (331 aa).

The KARI N-terminal Rossmann domain maps to 2 to 182 (ARLYYDADAN…GGTRAGILET (181 aa)). NADP(+)-binding positions include 25–28 (YGSQ), Ser-51, Ser-53, and 83–86 (DEVQ). Residue His-108 is part of the active site. Gly-134 contributes to the NADP(+) binding site. The KARI C-terminal knotted domain maps to 183–328 (TFREETETDL…KDLRAMFSWT (146 aa)). Asp-191, Glu-195, Glu-227, and Glu-231 together coordinate Mg(2+). Residue Ser-252 coordinates substrate.

The protein belongs to the ketol-acid reductoisomerase family. It depends on Mg(2+) as a cofactor.

It carries out the reaction (2R)-2,3-dihydroxy-3-methylbutanoate + NADP(+) = (2S)-2-acetolactate + NADPH + H(+). The catalysed reaction is (2R,3R)-2,3-dihydroxy-3-methylpentanoate + NADP(+) = (S)-2-ethyl-2-hydroxy-3-oxobutanoate + NADPH + H(+). Its pathway is amino-acid biosynthesis; L-isoleucine biosynthesis; L-isoleucine from 2-oxobutanoate: step 2/4. The protein operates within amino-acid biosynthesis; L-valine biosynthesis; L-valine from pyruvate: step 2/4. Functionally, involved in the biosynthesis of branched-chain amino acids (BCAA). Catalyzes an alkyl-migration followed by a ketol-acid reduction of (S)-2-acetolactate (S2AL) to yield (R)-2,3-dihydroxy-isovalerate. In the isomerase reaction, S2AL is rearranged via a Mg-dependent methyl migration to produce 3-hydroxy-3-methyl-2-ketobutyrate (HMKB). In the reductase reaction, this 2-ketoacid undergoes a metal-dependent reduction by NADPH to yield (R)-2,3-dihydroxy-isovalerate. The sequence is that of Ketol-acid reductoisomerase (NADP(+)) from Acaryochloris marina (strain MBIC 11017).